Here is a 107-residue protein sequence, read N- to C-terminus: uncharacterized protein (107 aa).

This is an uncharacterized protein from Homo sapiens (Human).